A 154-amino-acid chain; its full sequence is Jupiter microtubule associated homolog 1 (154 aa).

Met-1 carries the post-translational modification N-acetylmethionine. Positions 1–19 (MTTTTTFKGVDPNSRNSSR) are enriched in polar residues. The interval 1 to 154 (MTTTTTFKGV…PGGKSSLVLG (154 aa)) is disordered. Thr-2 carries the N-acetylthreonine; in Hematological and neurological expressed 1 protein, N-terminally processed modification. Residues Ser-28 and Ser-31 each carry the phosphoserine modification. Residue Thr-54 is modified to Phosphothreonine. Phosphoserine occurs at positions 71, 80, 87, 88, and 92. A compositionally biased stretch (polar residues) spans 80–91 (SGPQRRNSSEAN). Basic and acidic residues predominate over residues 96–108 (LDLKGEGDVHENV). A compositionally biased stretch (pro residues) spans 125–138 (PAAPVPSPVAPAPV). Ser-131 is subject to Phosphoserine. Position 148 is an N6-acetyllysine (Lys-148).

Belongs to the JUPITER family. As to quaternary structure, interacts with the complex composed, at least, of APC, CTNNB1 and GSK3B; the interaction takes place with the inactive form of GSK3B (phosphorylated at 'Ser-9').

It is found in the nucleus. It localises to the cytoplasm. In terms of biological role, modulates negatively AKT-mediated GSK3B signaling. Induces CTNNB1 'Ser-33' phosphorylation and degradation through the suppression of the inhibitory 'Ser-9' phosphorylation of GSK3B, which represses the function of the APC:CTNNB1:GSK3B complex and the interaction with CDH1/E-cadherin in adherent junctions. Plays a role in the regulation of cell cycle and cell adhesion. Has an inhibitory role on AR-signaling pathway through the induction of receptor proteasomal degradation. This is Jupiter microtubule associated homolog 1 from Bos taurus (Bovine).